The chain runs to 104 residues: Putative ankyrin repeat protein L677 (104 aa).

ANK repeat units follow at residues 16–43 (FNKSSLEIACIENDIGTVKKIINLNPNL), 44–73 (DISHCLNLAIESKNYQIVKFLLKKNISNSV), and 75–102 (LEAYDCACINGKISIMELLIQYLNNKSI).

The sequence is that of Putative ankyrin repeat protein L677 from Acanthamoeba polyphaga (Amoeba).